Here is a 316-residue protein sequence, read N- to C-terminus: Melanocyte-stimulating hormone receptor (316 aa).

The Extracellular portion of the chain corresponds to 1–37 (MPMQGAQRKLLGSLNSTPTATSNLGLAANHTGAPCLE). An N-linked (GlcNAc...) asparagine glycan is attached at Asn29. The helical transmembrane segment at 38 to 63 (VSIPDGLFLSLGLVSLVENVLVVAAI) threads the bilayer. Over 64–72 (AKNRNLHSS) the chain is Cytoplasmic. A helical membrane pass occupies residues 73 to 93 (MYCFICCLALSDLLVSGSNML). The Extracellular segment spans residues 94–118 (ETAVILLLETGALATRTSVVQQLHN). Residues 119 to 140 (TINVLTCSSMLCSLCFLGAIAV) traverse the membrane as a helical segment. Topologically, residues 141–163 (DRYISIFYALRYHSIMTLPRAQR) are cytoplasmic. The helical transmembrane segment at 164–183 (AIAAIWVASVLSSTLFITYY) threads the bilayer. Residues 184-191 (DHAAVLLC) lie on the Extracellular side of the membrane. Residues 192–211 (LVVFFLAMLVLMAVLYVHML) form a helical membrane-spanning segment. Residues 212 to 240 (ARACQHAHGIIRLHKRQTPAHQAFGLRGA) are Cytoplasmic-facing. Residues 241–266 (ATLTILLGIFFLCWGPFFLHLTLVVF) traverse the membrane as a helical segment. Residues 267-279 (CPQHLTCSCIFKN) lie on the Extracellular side of the membrane. A helical membrane pass occupies residues 280 to 300 (FKVFLTLIICNTIIDPLIYAF). Topologically, residues 301–316 (RSQELRRTLKEVLCSW) are cytoplasmic. Residue Cys314 is the site of S-palmitoyl cysteine attachment.

Belongs to the G-protein coupled receptor 1 family. As to quaternary structure, interacts with MGRN1, but does not undergo MGRN1-mediated ubiquitination; this interaction competes with GNAS-binding and thus inhibits agonist-induced cAMP production. Interacts with OPN3; the interaction results in a decrease in MC1R-mediated cAMP signaling and ultimately a decrease in melanin production in melanocytes.

It localises to the cell membrane. Receptor for MSH (alpha, beta and gamma) and ACTH. The activity of this receptor is mediated by G proteins which activate adenylate cyclase. Mediates melanogenesis, the production of eumelanin (black/brown) and phaeomelanin (red/yellow), via regulation of cAMP signaling in melanocytes. The chain is Melanocyte-stimulating hormone receptor (MC1R) from Saguinus geoffroyi (Geoffroy's tamarin).